The chain runs to 233 residues: Bcl-2-like protein 1 (233 aa).

The short motif at 4 to 24 is the BH4 element; that stretch reads SNRELVVDFLSYKLSQKGYSW. A disordered region spans residues 28 to 71; the sequence is SDVEENRTEAPEGTESEMETPSAINGNPSWHLADSPAVNGATGH. Residue S49 is modified to Phosphoserine; by PLK3. Position 62 is a phosphoserine; by CDK1 (S62). Residues 86–100 carry the BH3 motif; that stretch reads VKQALREAGDEFELR. Residues 129–148 carry the BH1 motif; it reads ELFRDGVNWGRIVAFFSFGG. The BH2 motif lies at 180-195; sequence PWIQENGGWDTFVELY. Residues 210-226 form a helical membrane-spanning segment; it reads FNRWFLTGMTVAGVVLL.

It belongs to the Bcl-2 family. In terms of assembly, homodimer. Interacts with BCL2L11. Interacts with BAD. Interacts with PGAM5. Interacts with HEBP2. Interacts with p53/TP53 and BBC3; interaction with BBC3 disrupts the interaction with p53/TP53. Interacts with ATP5F1A and ATP5F1B; the interactions mediate the association of isoform Bcl-X(L) with the mitochondrial membrane ATP synthase F(1)F(0) ATP synthase. Interacts with VDAC1. Interacts with BCL2L11 (via BH3). Interacts with RNF183. Interacts with GIMAP3/IAN4 and GIMAP5/IAN5. Interacts with GIMAP5 and HSPA8/HSC70; the interaction between HSPA8 and BCL2L1 is impaired in the absence of GIMAP5. Interacts with isoform 4 of CLU; this interaction releases and activates BAX and promotes cell death. As to quaternary structure, forms heterodimers with BAX, BAK or BCL2; heterodimerization with BAX does not seem to be required for anti-apoptotic activity. Interacts with isoform 1 of SIVA1; the interaction inhibits the anti-apoptotic activity. Interacts with IKZF3. Interacts with RTL10/BOP. Interacts with DNM1L and CLTA; DNM1L and BCL2L1 isoform BCL-X(L) may form a complex in synaptic vesicles that also contains clathrin and MFF. Interacts (via the loop between motifs BH4 and BH3) with NLRP1 (via LRR repeats), but not with NLRP2, NLRP3, NLRP4, PYCARD, nor MEFV. Interacts with BECN1. Proteolytically cleaved by caspases during apoptosis. The cleaved protein, lacking the BH4 motif, has pro-apoptotic activity. Post-translationally, phosphorylated on Ser-62 by CDK1. This phosphorylation is partial in normal mitotic cells, but complete in G2-arrested cells upon DNA-damage, thus promoting subsequent apoptosis probably by triggering caspases-mediated proteolysis. Phosphorylated by PLK3, leading to regulate the G2 checkpoint and progression to cytokinesis during mitosis. Phosphorylation at Ser-49 appears during the S phase and G2, disappears rapidly in early mitosis during prometaphase, metaphase and early anaphase, and re-appears during telophase and cytokinesis. In terms of processing, ubiquitinated by RNF183 during prolonged ER stress, leading to degradation by the proteosome. Bcl-X(S) is expressed at high levels in cells that undergo a high rate of turnover, such as developing lymphocytes. In contrast, Bcl-X(L) is found in tissues containing long-lived postmitotic cells, such as adult brain.

It is found in the mitochondrion inner membrane. The protein resides in the mitochondrion outer membrane. Its subcellular location is the mitochondrion matrix. The protein localises to the cytoplasmic vesicle. It localises to the secretory vesicle. It is found in the synaptic vesicle membrane. The protein resides in the cytoplasm. Its subcellular location is the cytosol. The protein localises to the cytoskeleton. It localises to the microtubule organizing center. It is found in the centrosome. The protein resides in the nucleus membrane. Potent inhibitor of cell death. Inhibits activation of caspases. Appears to regulate cell death by blocking the voltage-dependent anion channel (VDAC) by binding to it and preventing the release of the caspase activator, CYC1, from the mitochondrial membrane. Also acts as a regulator of G2 checkpoint and progression to cytokinesis during mitosis. Functionally, isoform Bcl-X(L) also regulates presynaptic plasticity, including neurotransmitter release and recovery, number of axonal mitochondria as well as size and number of synaptic vesicle clusters. During synaptic stimulation, increases ATP availability from mitochondria through regulation of mitochondrial membrane ATP synthase F(1)F(0) activity and regulates endocytic vesicle retrieval in hippocampal neurons through association with DMN1L and stimulation of its GTPase activity in synaptic vesicles. May attenuate inflammation impairing NLRP1-inflammasome activation, hence CASP1 activation and IL1B release. In terms of biological role, isoform Bcl-X(S) promotes apoptosis. This Homo sapiens (Human) protein is Bcl-2-like protein 1 (BCL2L1).